A 434-amino-acid polypeptide reads, in one-letter code: Cullin-like protein 5 (434 aa).

The tract at residues 1-34 (MKRSISPDPFSSTKSPKLVHHSPDDGGAEGNPYR) is disordered.

Belongs to the cullin family.

This chain is Cullin-like protein 5, found in Arabidopsis thaliana (Mouse-ear cress).